Consider the following 736-residue polypeptide: Catalase-peroxidase 2 (736 aa).

Residues 91-227 constitute a cross-link (tryptophyl-tyrosyl-methioninium (Trp-Tyr) (with M-253)); that stretch reads WHSAGTYRMG…LAAVQMGLIY (137 aa). The active-site Proton acceptor is histidine 92. Residues 227–253 constitute a cross-link (tryptophyl-tyrosyl-methioninium (Tyr-Met) (with W-91)); it reads YVNPEGPDGNPDPVAAAYDIREVFGRM. Heme b is bound at residue histidine 268.

This sequence belongs to the peroxidase family. Peroxidase/catalase subfamily. As to quaternary structure, homodimer or homotetramer. Requires heme b as cofactor. Post-translationally, formation of the three residue Trp-Tyr-Met cross-link is important for the catalase, but not the peroxidase activity of the enzyme.

It catalyses the reaction H2O2 + AH2 = A + 2 H2O. The catalysed reaction is 2 H2O2 = O2 + 2 H2O. Its function is as follows. Bifunctional enzyme with both catalase and broad-spectrum peroxidase activity. Shows peroxidase specificity towards odianisidine, ABTS and pyrogallol, but methoxyphenol and 2-chloronaphthol are not peroxidized. The polypeptide is Catalase-peroxidase 2 (Burkholderia cenocepacia (strain ATCC BAA-245 / DSM 16553 / LMG 16656 / NCTC 13227 / J2315 / CF5610) (Burkholderia cepacia (strain J2315))).